The chain runs to 397 residues: Ribosomal RNA large subunit methyltransferase I (397 aa).

In terms of domain architecture, PUA spans 2–81; sequence SAQVILQPSR…ESIDNGFFLR (80 aa).

This sequence belongs to the methyltransferase superfamily. RlmI family.

It localises to the cytoplasm. The catalysed reaction is cytidine(1962) in 23S rRNA + S-adenosyl-L-methionine = 5-methylcytidine(1962) in 23S rRNA + S-adenosyl-L-homocysteine + H(+). Its function is as follows. Specifically methylates the cytosine at position 1962 (m5C1962) of 23S rRNA. The polypeptide is Ribosomal RNA large subunit methyltransferase I (Alteromonas mediterranea (strain DSM 17117 / CIP 110805 / LMG 28347 / Deep ecotype)).